The following is a 121-amino-acid chain: uncharacterized protein (121 aa).

The chain crosses the membrane as a helical span at residues 65–84 (TILFYTPTLICFLFLQNFLY).

Its subcellular location is the membrane. This is an uncharacterized protein from Saccharomyces cerevisiae (strain ATCC 204508 / S288c) (Baker's yeast).